Here is a 1073-residue protein sequence, read N- to C-terminus: Error-prone DNA polymerase (1073 aa).

Residues 41 to 73 (EAEPECLSTPRPGPGSTEVPGERRGSRQGERSG) are disordered. Residues 60–73 (PGERRGSRQGERSG) show a composition bias toward basic and acidic residues.

Belongs to the DNA polymerase type-C family. DnaE2 subfamily.

The protein resides in the cytoplasm. It carries out the reaction DNA(n) + a 2'-deoxyribonucleoside 5'-triphosphate = DNA(n+1) + diphosphate. DNA polymerase involved in damage-induced mutagenesis and translesion synthesis (TLS). It is not the major replicative DNA polymerase. The protein is Error-prone DNA polymerase of Corynebacterium efficiens (strain DSM 44549 / YS-314 / AJ 12310 / JCM 11189 / NBRC 100395).